A 313-amino-acid polypeptide reads, in one-letter code: Aspartate carbamoyltransferase catalytic subunit (313 aa).

Carbamoyl phosphate-binding residues include Arg59 and Thr60. Lys87 lines the L-aspartate pocket. Residues Arg109, His137, and Gln140 each contribute to the carbamoyl phosphate site. L-aspartate-binding residues include Arg170 and Arg224. 2 residues coordinate carbamoyl phosphate: Gly265 and Pro266.

It belongs to the aspartate/ornithine carbamoyltransferase superfamily. ATCase family. In terms of assembly, heterododecamer (2C3:3R2) of six catalytic PyrB chains organized as two trimers (C3), and six regulatory PyrI chains organized as three dimers (R2).

The enzyme catalyses carbamoyl phosphate + L-aspartate = N-carbamoyl-L-aspartate + phosphate + H(+). It participates in pyrimidine metabolism; UMP biosynthesis via de novo pathway; (S)-dihydroorotate from bicarbonate: step 2/3. Functionally, catalyzes the condensation of carbamoyl phosphate and aspartate to form carbamoyl aspartate and inorganic phosphate, the committed step in the de novo pyrimidine nucleotide biosynthesis pathway. The protein is Aspartate carbamoyltransferase catalytic subunit of Sinorhizobium medicae (strain WSM419) (Ensifer medicae).